The chain runs to 255 residues: Transmembrane protein 81 (255 aa).

A signal peptide spans 1-30 (MKVLATSFVLGSLGLAFYLPLVVTTPKTLA). At 31-226 (IPEKLQEAVG…HPKWKKKVAS (196 aa)) the chain is on the extracellular side. Asn45 is a glycosylation site (N-linked (GlcNAc...) asparagine). The Ig-like domain occupies 83 to 171 (TNWICGMLHF…VQLVKNLRLV (89 aa)). Cys104 and Cys160 form a disulfide bridge. Residues 227–247 (ALGIGIAIGVVGGVLVRIVLC) form a helical membrane-spanning segment. Residues 248-255 (ALRGGLQQ) lie on the Cytoplasmic side of the membrane.

Forms a complex with IZUMO1 and SPACA6 on spermatocyte cell membrane required for fertilization. Highly expressed in sperm (at protein level).

Its subcellular location is the cell membrane. Essential fertilization factor required for male fertility. Part of a conserved trimeric sperm complex with the essential fertilization factors IZUMO1 and SPACA6 which bridges sperm and oocyte membranes during fertilization by binding to IZUMO1R/JUNO on the oocyte. This is Transmembrane protein 81 from Homo sapiens (Human).